A 337-amino-acid polypeptide reads, in one-letter code: Pantothenate synthetase (337 aa).

Position 31 to 38 (31 to 38 (MGALHEGH)) interacts with ATP. Residue histidine 38 is the Proton donor of the active site. Residue glutamine 65 participates in (R)-pantoate binding. Glutamine 65 provides a ligand contact to beta-alanine. An ATP-binding site is contributed by 152–155 (GQKD). Position 158 (glutamine 158) interacts with (R)-pantoate. ATP is bound by residues valine 181 and 189-192 (LSSR).

The protein belongs to the pantothenate synthetase family. As to quaternary structure, homodimer.

The protein resides in the cytoplasm. The enzyme catalyses (R)-pantoate + beta-alanine + ATP = (R)-pantothenate + AMP + diphosphate + H(+). Its pathway is cofactor biosynthesis; (R)-pantothenate biosynthesis; (R)-pantothenate from (R)-pantoate and beta-alanine: step 1/1. In terms of biological role, catalyzes the condensation of pantoate with beta-alanine in an ATP-dependent reaction via a pantoyl-adenylate intermediate. In Streptomyces coelicolor (strain ATCC BAA-471 / A3(2) / M145), this protein is Pantothenate synthetase.